The following is a 232-amino-acid chain: Large ribosomal subunit protein uL1 (232 aa).

The protein belongs to the universal ribosomal protein uL1 family. In terms of assembly, part of the 50S ribosomal subunit.

Binds directly to 23S rRNA. The L1 stalk is quite mobile in the ribosome, and is involved in E site tRNA release. Functionally, protein L1 is also a translational repressor protein, it controls the translation of the L11 operon by binding to its mRNA. In Rhizobium rhizogenes (strain K84 / ATCC BAA-868) (Agrobacterium radiobacter), this protein is Large ribosomal subunit protein uL1.